The sequence spans 234 residues: Phosphoribosylaminoimidazole-succinocarboxamide synthase (234 aa).

The protein belongs to the SAICAR synthetase family.

It carries out the reaction 5-amino-1-(5-phospho-D-ribosyl)imidazole-4-carboxylate + L-aspartate + ATP = (2S)-2-[5-amino-1-(5-phospho-beta-D-ribosyl)imidazole-4-carboxamido]succinate + ADP + phosphate + 2 H(+). It participates in purine metabolism; IMP biosynthesis via de novo pathway; 5-amino-1-(5-phospho-D-ribosyl)imidazole-4-carboxamide from 5-amino-1-(5-phospho-D-ribosyl)imidazole-4-carboxylate: step 1/2. The chain is Phosphoribosylaminoimidazole-succinocarboxamide synthase from Clostridium botulinum (strain ATCC 19397 / Type A).